We begin with the raw amino-acid sequence, 349 residues long: Phenylalanine--tRNA ligase alpha subunit (349 aa).

Glutamate 258 contacts Mg(2+).

This sequence belongs to the class-II aminoacyl-tRNA synthetase family. Phe-tRNA synthetase alpha subunit type 1 subfamily. Tetramer of two alpha and two beta subunits. Mg(2+) serves as cofactor.

The protein resides in the cytoplasm. The catalysed reaction is tRNA(Phe) + L-phenylalanine + ATP = L-phenylalanyl-tRNA(Phe) + AMP + diphosphate + H(+). The chain is Phenylalanine--tRNA ligase alpha subunit from Rickettsia rickettsii (strain Sheila Smith).